Consider the following 410-residue polypeptide: 2-oxoglutarate-dependent dioxygenase AOP3 (410 aa).

One can recognise a Fe2OG dioxygenase domain in the interval 258 to 355 (GNASVGAKEA…RYAAALFSYP (98 aa)). Residues His-278, Asp-280, and His-335 each contribute to the Fe cation site. Residue Arg-346 participates in 2-oxoglutarate binding.

The protein belongs to the iron/ascorbate-dependent oxidoreductase family. Fe(2+) is required as a cofactor.

2-oxoglutarate-dependent dioxygenase involved in glucosinolates biosynthesis. Catalyzes the conversion of methylsulfinylalkyl glucosinolates to hydroxyalkyl glucosinolates. The sequence is that of 2-oxoglutarate-dependent dioxygenase AOP3 (AOP3) from Arabidopsis thaliana (Mouse-ear cress).